A 360-amino-acid polypeptide reads, in one-letter code: MASTSFFPPRPSSTLAEIASLTKATLVDASYAEHRITGLASLDEAGPMHLSFFENLRYSDELANTRAGACLVSERFEGRVPSHVAVLRARRPFHAFVAYARHLYSDALRPHTGVGAPGIAPTAVIHETAKLEDEVTVEPLAVIGPDVEIGSGTVIGAGAVIAAGVKIGRDCDIGAGSHLQHALIGNNVLMHPGCHIGQDGFGFIFAGQHTKVPQTGRVIIQHDVELGAGTTIDRGSLRDTVIGEGTKIDNQVQIGHNVTIGRHCVIAAKCGLAGSLTLGDNVALGAMVGINNHVVIGDGAQVAAMSGVKDSIPAGERWGGIFARPTRTWFREMLAVRRLAEGSGAETAARPDDDRDEGRG.

Histidine 256 (proton acceptor) is an active-site residue. Residues 341-360 form a disordered region; sequence EGSGAETAARPDDDRDEGRG. Residues 349–360 are compositionally biased toward basic and acidic residues; sequence ARPDDDRDEGRG.

It belongs to the transferase hexapeptide repeat family. LpxD subfamily. In terms of assembly, homotrimer.

The catalysed reaction is a UDP-3-O-[(3R)-3-hydroxyacyl]-alpha-D-glucosamine + a (3R)-hydroxyacyl-[ACP] = a UDP-2-N,3-O-bis[(3R)-3-hydroxyacyl]-alpha-D-glucosamine + holo-[ACP] + H(+). It participates in bacterial outer membrane biogenesis; LPS lipid A biosynthesis. Catalyzes the N-acylation of UDP-3-O-acylglucosamine using 3-hydroxyacyl-ACP as the acyl donor. Is involved in the biosynthesis of lipid A, a phosphorylated glycolipid that anchors the lipopolysaccharide to the outer membrane of the cell. This is UDP-3-O-acylglucosamine N-acyltransferase from Rhodopseudomonas palustris (strain ATCC BAA-98 / CGA009).